The primary structure comprises 375 residues: Probable aspartate aminotransferase (375 aa).

The L-aspartate site is built by G31 and N165. Position 223 is an N6-(pyridoxal phosphate)lysine (K223). R353 lines the L-aspartate pocket.

Belongs to the class-I pyridoxal-phosphate-dependent aminotransferase family. Homodimer. Pyridoxal 5'-phosphate serves as cofactor.

It is found in the cytoplasm. It catalyses the reaction L-aspartate + 2-oxoglutarate = oxaloacetate + L-glutamate. This chain is Probable aspartate aminotransferase, found in Methanocaldococcus jannaschii (strain ATCC 43067 / DSM 2661 / JAL-1 / JCM 10045 / NBRC 100440) (Methanococcus jannaschii).